The primary structure comprises 227 residues: Lipoprotein-releasing system ATP-binding protein LolD (227 aa).

In terms of domain architecture, ABC transporter spans 7 to 227 (LQLTGVERHY…TISDGKIVDF (221 aa)). Position 43-50 (43-50 (APSGTGKS)) interacts with ATP.

The protein belongs to the ABC transporter superfamily. Lipoprotein translocase (TC 3.A.1.125) family. In terms of assembly, the complex is composed of two ATP-binding proteins (LolD) and two transmembrane proteins (LolC and LolE).

Its subcellular location is the cell inner membrane. Its function is as follows. Part of the ABC transporter complex LolCDE involved in the translocation of mature outer membrane-directed lipoproteins, from the inner membrane to the periplasmic chaperone, LolA. Responsible for the formation of the LolA-lipoprotein complex in an ATP-dependent manner. In Rhizobium johnstonii (strain DSM 114642 / LMG 32736 / 3841) (Rhizobium leguminosarum bv. viciae), this protein is Lipoprotein-releasing system ATP-binding protein LolD.